A 540-amino-acid chain; its full sequence is Gamma-cadinene synthase (540 aa).

5 residues coordinate Mg(2+): Asp-292, Asp-296, Asp-436, Ser-440, and Glu-444. A DDXXD motif motif is present at residues Asp-292–Asp-296.

It belongs to the terpene synthase family. The cofactor is Mg(2+). Requires Mn(2+) as cofactor.

It carries out the reaction (2E,6E)-farnesyl diphosphate = (+)-gamma-cadinene + diphosphate. It functions in the pathway secondary metabolite biosynthesis; terpenoid biosynthesis. In terms of biological role, sesquiterpene synthase that catalyzes the cyclization of trans,trans-farnesyl diphosphate (FPP) to gamma cadinene. In Ocimum basilicum (Sweet basil), this protein is Gamma-cadinene synthase (CDS).